We begin with the raw amino-acid sequence, 65 residues long: MPKMKTCKSARKRYAFTSKGKVKYKKQNLRHILTKKSAKRKRNLGKSGLVSNVEVKRIKTLLPYV.

It belongs to the bacterial ribosomal protein bL35 family.

This Borrelia duttonii (strain Ly) protein is Large ribosomal subunit protein bL35.